The sequence spans 366 residues: DNA replication and repair protein RecF (366 aa).

Gly30–Thr37 serves as a coordination point for ATP.

It belongs to the RecF family.

The protein localises to the cytoplasm. In terms of biological role, the RecF protein is involved in DNA metabolism; it is required for DNA replication and normal SOS inducibility. RecF binds preferentially to single-stranded, linear DNA. It also seems to bind ATP. The chain is DNA replication and repair protein RecF from Streptococcus thermophilus (strain CNRZ 1066).